Reading from the N-terminus, the 314-residue chain is Malate dehydrogenase (314 aa).

NAD(+) is bound by residues 11-16 (GSGNIG) and Asp-35. The substrate site is built by Arg-84 and Arg-90. NAD(+) contacts are provided by residues Asn-97 and 120–122 (ITN). Positions 122 and 153 each coordinate substrate. His-177 (proton acceptor) is an active-site residue.

It belongs to the LDH/MDH superfamily. MDH type 3 family.

The catalysed reaction is (S)-malate + NAD(+) = oxaloacetate + NADH + H(+). In terms of biological role, catalyzes the reversible oxidation of malate to oxaloacetate. In Rickettsia bellii (strain RML369-C), this protein is Malate dehydrogenase.